Reading from the N-terminus, the 215-residue chain is ATP-dependent dethiobiotin synthetase BioD (215 aa).

ATP is bound at residue 13–18 (DIGKTV). Thr17 contributes to the Mg(2+) binding site. Lys38 is a catalytic residue. Thr42 serves as a coordination point for substrate. ATP contacts are provided by residues Asp50, 115–118 (EGAG), and 175–176 (NH). Residues Asp50 and Glu115 each contribute to the Mg(2+) site.

Belongs to the dethiobiotin synthetase family. As to quaternary structure, homodimer. Mg(2+) serves as cofactor.

The protein resides in the cytoplasm. The catalysed reaction is (7R,8S)-7,8-diammoniononanoate + CO2 + ATP = (4R,5S)-dethiobiotin + ADP + phosphate + 3 H(+). Its pathway is cofactor biosynthesis; biotin biosynthesis; biotin from 7,8-diaminononanoate: step 1/2. Catalyzes a mechanistically unusual reaction, the ATP-dependent insertion of CO2 between the N7 and N8 nitrogen atoms of 7,8-diaminopelargonic acid (DAPA, also called 7,8-diammoniononanoate) to form a ureido ring. The chain is ATP-dependent dethiobiotin synthetase BioD from Neisseria meningitidis serogroup C (strain 053442).